Consider the following 232-residue polypeptide: MGQKVHPTGIRLGISKPWTSTWYANTADYADNLFNDHQVRQYLTKALKTASLSKIVIERPAKSIRVTIHTARPGVVIGKKGEDVEKLRKHVSKLAGVPAQINIAEVRKPELDGQLVADSIASQLERRVMFRRAMKRAVQNAMRIGAKGIKVQVSGRLGGAEIARAEWYREGRVPLHTFRADIDYATSEANTTYGIIGVKVWIFKGEVLGGLPLTQEQPAQPKKKGRSPKREG.

The KH type-2 domain maps to 39 to 107 (VRQYLTKALK…PAQINIAEVR (69 aa)).

Belongs to the universal ribosomal protein uS3 family. Part of the 30S ribosomal subunit. Forms a tight complex with proteins S10 and S14.

Functionally, binds the lower part of the 30S subunit head. Binds mRNA in the 70S ribosome, positioning it for translation. This chain is Small ribosomal subunit protein uS3, found in Pseudoalteromonas atlantica (strain T6c / ATCC BAA-1087).